The chain runs to 238 residues: Tetraspanin-8 (238 aa).

Residues 1-9 (MAGVNVCIK) are Cytoplasmic-facing. The chain crosses the membrane as a helical span at residues 10-33 (CSMFIFNFVFWLCGAIILSVAISI). Residues 34–57 (RAGKIGQEILAPGDADLNLFIAVN) lie on the Extracellular side of the membrane. A helical transmembrane segment spans residues 58–72 (ILIFVGAVIMILGFL). Topologically, residues 73 to 83 (GCCGAMKENQF) are cytoplasmic. A helical membrane pass occupies residues 84 to 109 (MMILFFVGLLMILLLQVAAGIVATTR). Residues 110–206 (KSKTEQALNK…ASISQMFSKR (97 aa)) lie on the Extracellular side of the membrane. N-linked (GlcNAc...) asparagine glycosylation is present at asparagine 118. A helical transmembrane segment spans residues 207 to 231 (LFIVLALAFGLAAIEVLGLIFSIVL). Residues 232 to 238 (YCQMRKK) are Cytoplasmic-facing.

This sequence belongs to the tetraspanin (TM4SF) family. As to quaternary structure, forms homooligomers. Interacts with MEP1B. Interacts with integrin alpha3/ITGA3. Interacts with RICTOR and MTOR. Interacts with ADAM17. Interacts with ECE1.

Its subcellular location is the cell membrane. Functionally, structural component of specialized membrane microdomains known as tetraspanin-enriched microdomains (TERMs), which act as platforms for receptor clustering and signaling. Participates thereby in diverse biological functions such as cell signal transduction, migration and protein trafficking. Promotes ADAM17-mediated TNF-alpha processing through recruitment of ADAM17 to tetraspanin-enriched micro-domains (TEMs). Forms a complex with RICTOR and integrin alpha3/ITGA3 to mediate mTORC2 activation and AKT1 phosphorylation leading to cell migration. Reduces apoptosis and autophagy induced by high glucose levels through forming a complex with mTOR and RICTOR. Contributes to the maintenance of intestinal epithelial barrier and plays a role in the regulation of intestine inflammation by switching interferon gamma receptor 1/IFNGR1 from clathrin-dependent to lipid raft-dependent endocytosis route to limit STAT1 activation magnitude and duration. Acts as a modulator of the endothelin axis by associating with endothelin converting enzyme ECE1 and regulating its activity of conversion of the endothelin-1 precursor to endothelin. The protein is Tetraspanin-8 (TSPAN8) of Bos taurus (Bovine).